Here is a 137-residue protein sequence, read N- to C-terminus: Chaperone protein YscB (137 aa).

Interacts with SycN to form a complex which specifically binds to YopN.

Its subcellular location is the cytoplasm. The protein localises to the cell inner membrane. Functions as a specific chaperone for YopN. It could facilitate the secretion and the subsequent translocation of YopN. This Yersinia pestis protein is Chaperone protein YscB (yscB).